The sequence spans 392 residues: Queuine tRNA-ribosyltransferase (392 aa).

Aspartate 93 serves as the catalytic Proton acceptor. Substrate is bound by residues 93–97 (DSGGY), aspartate 147, glutamine 189, and glycine 216. An RNA binding region spans residues 247–253 (GVGAPED). Aspartate 266 functions as the Nucleophile in the catalytic mechanism. The segment at 271-275 (TRVAR) is RNA binding; important for wobble base 34 recognition. Zn(2+)-binding residues include cysteine 304, cysteine 306, cysteine 309, and histidine 335.

The protein belongs to the queuine tRNA-ribosyltransferase family. As to quaternary structure, homodimer. Within each dimer, one monomer is responsible for RNA recognition and catalysis, while the other monomer binds to the replacement base PreQ1. The cofactor is Zn(2+).

It catalyses the reaction 7-aminomethyl-7-carbaguanine + guanosine(34) in tRNA = 7-aminomethyl-7-carbaguanosine(34) in tRNA + guanine. It functions in the pathway tRNA modification; tRNA-queuosine biosynthesis. Its function is as follows. Catalyzes the base-exchange of a guanine (G) residue with the queuine precursor 7-aminomethyl-7-deazaguanine (PreQ1) at position 34 (anticodon wobble position) in tRNAs with GU(N) anticodons (tRNA-Asp, -Asn, -His and -Tyr). Catalysis occurs through a double-displacement mechanism. The nucleophile active site attacks the C1' of nucleotide 34 to detach the guanine base from the RNA, forming a covalent enzyme-RNA intermediate. The proton acceptor active site deprotonates the incoming PreQ1, allowing a nucleophilic attack on the C1' of the ribose to form the product. After dissociation, two additional enzymatic reactions on the tRNA convert PreQ1 to queuine (Q), resulting in the hypermodified nucleoside queuosine (7-(((4,5-cis-dihydroxy-2-cyclopenten-1-yl)amino)methyl)-7-deazaguanosine). In Dehalococcoides mccartyi (strain ATCC BAA-2100 / JCM 16839 / KCTC 5957 / BAV1), this protein is Queuine tRNA-ribosyltransferase.